Reading from the N-terminus, the 1037-residue chain is Receptor kinase-like protein Xa21 (1037 aa).

A signal peptide spans 1-24; it reads MARSPTSVMISSLLLLLLIGPASS. Topologically, residues 25–665 are extracellular; it reads DDAAAAAAAR…LLENRKHFPV (641 aa). 3 N-linked (GlcNAc...) asparagine glycosylation sites follow: Asn66, Asn101, and Asn112. LRR repeat units follow at residues 89 to 112, 113 to 137, 138 to 161, 163 to 185, 187 to 210, 211 to 234, 236 to 259, 260 to 283, 285 to 308, 310 to 331, and 333 to 355; these read PHRV…SLGN, LSFL…LSRL, SRLQ…IGAC, KLTS…IGAS, KHLS…LGNL, TSLQ…LGQL, SSLL…IWNL, SSLR…AFKT, HLLE…VANA, HLTQ…GFGR, and RNLT…DWGF. An N-linked (GlcNAc...) asparagine glycan is attached at Asn209. N-linked (GlcNAc...) asparagine glycans are attached at residues Asn247 and Asn258. N-linked (GlcNAc...) asparagine glycosylation occurs at Asn307. N-linked (GlcNAc...) asparagine glycans are attached at residues Asn334, Asn361, and Asn385. 11 LRR repeats span residues 362–385, 387–411, 412–435, 437–459, 460–482, 483–507, 509–532, 533–556, 557–580, 581–604, and 606–629; these read CSKL…SFSN, STSL…IGNL, IGLQ…LGRL, NLGI…IGNL, TELN…TLSN, LTNL…LFNI, TLSI…IGHL, KNLV…LGDC, QLLR…LGQL, KGLE…LADI, and MLHS…AFAD. N-linked (GlcNAc...) asparagine glycosylation is found at Asn447, Asn458, Asn482, Asn495, and Asn515. N-linked (GlcNAc...) asparagine glycosylation is found at Asn592 and Asn611. The chain crosses the membrane as a helical span at residues 666-686; sequence LPISVSLVAALAILSSLYLLI. Residues 687 to 1037 lie on the Cytoplasmic side of the membrane; it reads TWHKRTKKGA…PVCEGASLEF (351 aa). The short motif at 689–694 is the Nuclear localization signal element; that stretch reads HKRTKK. Ser698 is modified (phosphoserine). The residue at position 700 (Thr700) is a Phosphothreonine. The residue at position 701 (Ser701) is a Phosphoserine. A Phosphothreonine modification is found at Thr717. The Protein kinase domain maps to 720–1019; the sequence is FAPTNLLGSG…GDIIDELNAI (300 aa). ATP contacts are provided by residues 726–734 and Lys748; that span reads LGSGSFGSV. The Proton acceptor role is filled by Asp854.

This sequence belongs to the protein kinase superfamily. Ser/Thr protein kinase family. Interacts with WRKY62/XB10 in the nucleus. Interacts with SERK2. Mn(2+) serves as cofactor. Mg(2+) is required as a cofactor. Undergoes protein cleavage upon X.oryzae pv. oryzae protein Ax21 detection, thus releasing the processed protein kinase Xa21 chain. Post-translationally, autophosphorylated on serine and threonine residues; these phosphorylation prevents proteolytic degradation.

It localises to the cell membrane. The protein resides in the endoplasmic reticulum membrane. Its subcellular location is the nucleus. The enzyme catalyses L-seryl-[protein] + ATP = O-phospho-L-seryl-[protein] + ADP + H(+). It catalyses the reaction L-threonyl-[protein] + ATP = O-phospho-L-threonyl-[protein] + ADP + H(+). In terms of biological role, receptor kinase that detects X.oryzae pv. oryzae protein Ax21 to promote innate immunity. Following X.oryzae pv. oryzae protein Ax21 detection, undergoes cleavage, releasing the processed protein kinase Xa21 chain. Functionally, the processed protein kinase Xa21 chain released by protein cleavage after X.oryzae pv. oryzae protein Ax21 detection translocates into the nucleus where it can bind and regulate WRKY62, a transcription factor. Confers resistance to the bacterial pathogen X.oryzae pv. oryzae (Xoo). The chain is Receptor kinase-like protein Xa21 from Oryza sativa subsp. japonica (Rice).